We begin with the raw amino-acid sequence, 179 residues long: CMT1A duplicated region transcript 4 protein homolog (179 aa).

A compositionally biased stretch (low complexity) spans 1–15 (MISRPESSLSGLESS). Positions 1–20 (MISRPESSLSGLESSQEVQK) are disordered.

The sequence is that of CMT1A duplicated region transcript 4 protein homolog (Cdrt4) from Mus musculus (Mouse).